A 699-amino-acid chain; its full sequence is Elongation factor G 1 (699 aa).

The region spanning 8–290 (ERYRNIGICA…AVIEYLPSPI (283 aa)) is the tr-type G domain. GTP-binding positions include 17–24 (AHVDAGKT), 88–92 (DTPGH), and 142–145 (NKMD).

The protein belongs to the TRAFAC class translation factor GTPase superfamily. Classic translation factor GTPase family. EF-G/EF-2 subfamily.

Its subcellular location is the cytoplasm. In terms of biological role, catalyzes the GTP-dependent ribosomal translocation step during translation elongation. During this step, the ribosome changes from the pre-translocational (PRE) to the post-translocational (POST) state as the newly formed A-site-bound peptidyl-tRNA and P-site-bound deacylated tRNA move to the P and E sites, respectively. Catalyzes the coordinated movement of the two tRNA molecules, the mRNA and conformational changes in the ribosome. This is Elongation factor G 1 from Vibrio vulnificus (strain YJ016).